A 587-amino-acid polypeptide reads, in one-letter code: Arginine--tRNA ligase (587 aa).

The 'HIGH' region signature appears at 127–137; that stretch reads ANPTGPLHVGH.

Belongs to the class-I aminoacyl-tRNA synthetase family. In terms of assembly, monomer.

The protein localises to the cytoplasm. The catalysed reaction is tRNA(Arg) + L-arginine + ATP = L-arginyl-tRNA(Arg) + AMP + diphosphate. The polypeptide is Arginine--tRNA ligase (Dechloromonas aromatica (strain RCB)).